A 409-amino-acid chain; its full sequence is Peptidase T (409 aa).

A Zn(2+)-binding site is contributed by His-78. Residue Asp-80 is part of the active site. Asp-140 provides a ligand contact to Zn(2+). Glu-173 (proton acceptor) is an active-site residue. Zn(2+)-binding residues include Glu-174, Asp-196, and His-379.

Belongs to the peptidase M20B family. The cofactor is Zn(2+).

Its subcellular location is the cytoplasm. It carries out the reaction Release of the N-terminal residue from a tripeptide.. In terms of biological role, cleaves the N-terminal amino acid of tripeptides. The polypeptide is Peptidase T (Salmonella enteritidis PT4 (strain P125109)).